A 139-amino-acid polypeptide reads, in one-letter code: Putative nickel-responsive regulator (139 aa).

Ni(2+)-binding residues include H79, H90, H92, and C98.

Belongs to the transcriptional regulatory CopG/NikR family. Requires Ni(2+) as cofactor.

In terms of biological role, transcriptional regulator. This Trichlorobacter lovleyi (strain ATCC BAA-1151 / DSM 17278 / SZ) (Geobacter lovleyi) protein is Putative nickel-responsive regulator.